We begin with the raw amino-acid sequence, 879 residues long: Metabotropic glutamate receptor 3 (879 aa).

An N-terminal signal peptide occupies residues 1 to 22 (MKMLTRLQVLTLALFSKGFLLS). Residues 23-576 (LGDHNFLRRE…EDYIRWEDAW (554 aa)) are Extracellular-facing. Cysteines 57 and 99 form a disulfide. L-glutamate-binding positions include serine 151 and 172 to 174 (AST). N-linked (GlcNAc...) asparagine glycosylation occurs at asparagine 209. Tyrosine 222 serves as a coordination point for L-glutamate. 7 disulfides stabilise this stretch: cysteine 240/cysteine 527, cysteine 361/cysteine 373, cysteine 412/cysteine 419, cysteine 509/cysteine 528, cysteine 513/cysteine 531, cysteine 534/cysteine 546, and cysteine 549/cysteine 562. N-linked (GlcNAc...) asparagine glycosylation is present at asparagine 292. Aspartate 301 is an L-glutamate binding site. Lysine 389 provides a ligand contact to L-glutamate. Residues asparagine 414 and asparagine 439 are each glycosylated (N-linked (GlcNAc...) asparagine). The helical transmembrane segment at 577-599 (AIGPVTIACLGFMCTCMVVTVFI) threads the bilayer. The Cytoplasmic portion of the chain corresponds to 600-613 (KHNNTPLVKASGRE). A helical membrane pass occupies residues 614–634 (LCYILLFGVGLSYCMTFFFIA). Topologically, residues 635–645 (KPSPVICALRR) are extracellular. A helical membrane pass occupies residues 646-664 (LGLGSSFAICYSALLTKTN). Residues 665-688 (CIARIFDGVKNGAQRPKFISPSSQ) are Cytoplasmic-facing. Residues 689 to 709 (VFICLGLILVQIVMVSVWLIL) form a helical membrane-spanning segment. The Extracellular portion of the chain corresponds to 710–734 (EAPGTRRYTLAEKRETVILKCNVKD). The helical transmembrane segment at 735–756 (SSMLISLTYDVILVILCTVYAF) threads the bilayer. At 757-769 (KTRKCPENFNEAK) the chain is on the cytoplasmic side. Residues 770–792 (FIGFTMYTTCIIWLAFLPIFYVT) traverse the membrane as a helical segment. The Extracellular portion of the chain corresponds to 793–802 (SSDYRVQTTT). Residues 803–828 (MCISVSLSGFVVLGCLFAPKVHIILF) form a helical membrane-spanning segment. The Cytoplasmic portion of the chain corresponds to 829–879 (QPQKNVVTHRLHLNRFSVSGTGTTYSQSSASTYVPTVCNGREVLDSTTSSL).

It belongs to the G-protein coupled receptor 3 family. Interacts with TAMALIN. As to expression, detected in brain cortex, thalamus, subthalamic nucleus, substantia nigra, hypothalamus, hippocampus, corpus callosum, caudate nucleus and amygdala.

The protein resides in the cell membrane. G-protein coupled receptor for glutamate. Ligand binding causes a conformation change that triggers signaling via guanine nucleotide-binding proteins (G proteins) and modulates the activity of down-stream effectors. Signaling inhibits adenylate cyclase activity. In Homo sapiens (Human), this protein is Metabotropic glutamate receptor 3 (GRM3).